The sequence spans 1093 residues: Phosphorylase b kinase regulatory subunit beta (1093 aa).

An N-acetylalanine modification is found at Ala2. The residue at position 4 (Ala4) is a Phosphoserine. The calmodulin-binding stretch occupies residues 7 to 29 (LTAEVSWKVLERRARTKRSGSVY). Phosphoserine; by autocatalysis is present on Ser12. Phosphoserine is present on residues Ser27 and Ser701. Positions 689–716 (EPPKHSKVKRQSSTPSAPELGQQPDVNI) are disordered. Calmodulin-binding stretches follow at residues 768 to 795 (RVYR…FSSS) and 920 to 951 (NGRC…ILER). Cys1090 carries S-farnesyl cysteine lipidation.

The protein belongs to the phosphorylase b kinase regulatory chain family. As to quaternary structure, hexadecamer of 4 heterotetramers, each composed of alpha, beta, gamma, and delta subunits. Alpha (PHKA1 or PHKA2) and beta (PHKB) are regulatory subunits, gamma (PHKG1 or PHKG2) is the catalytic subunit, and delta is calmodulin. Post-translationally, ser-701 is probably phosphorylated by PKA. Although the final Cys may be farnesylated, the terminal tripeptide is probably not removed, and the C-terminus is not methylated.

The protein resides in the cell membrane. The protein operates within glycan biosynthesis; glycogen metabolism. Its activity is regulated as follows. By phosphorylation of various serine residues. Functionally, phosphorylase b kinase catalyzes the phosphorylation of serine in certain substrates, including troponin I. The beta chain acts as a regulatory unit and modulates the activity of the holoenzyme in response to phosphorylation. In Homo sapiens (Human), this protein is Phosphorylase b kinase regulatory subunit beta (PHKB).